A 2148-amino-acid chain; its full sequence is Polyketide synthase 1 (2148 aa).

The interval 19–261 (FIFGDQSSCN…TPLAVHAPYH (243 aa)) is N-terminal acylcarrier protein transacylase domain (SAT). Residues 394 to 829 (ESKIAIIGMS…GGNTALLVED (436 aa)) form the Ketosynthase family 3 (KS3) domain. Catalysis depends on for beta-ketoacyl synthase activity residues Cys-566, His-701, and His-745. Residues 929–1233 (AFVFSGQGSQ…PSLMRNKDGW (305 aa)) form a malonyl-CoA:ACP transacylase (MAT) domain region. Ser-1018 functions as the For acyl/malonyl transferase activity in the catalytic mechanism. Positions 1310–1624 (TASVHRIVHE…RKVLNTAMPP (315 aa)) are product template (PT) domain. The N-terminal hotdog fold stretch occupies residues 1314 to 1447 (HRIVHESVDK…SSLHFEQPKV (134 aa)). A PKS/mFAS DH domain is found at 1314–1619 (HRIVHESVDK…FQGIPRKVLN (306 aa)). His-1346 (proton acceptor; for dehydratase activity) is an active-site residue. The C-terminal hotdog fold stretch occupies residues 1474–1619 (LNSRMSSGVI…FQGIPRKVLN (146 aa)). The Proton donor; for dehydratase activity role is filled by Asp-1533. The interval 1619 to 1657 (NTAMPPPKSQNEAPVRSAPAKPAAKPPKSASSEHSGHFA) is disordered. A compositionally biased stretch (low complexity) spans 1635–1650 (SAPAKPAAKPPKSASS). The region spanning 1678-1752 (RNPMLAVFKI…DLATHLGLDT (75 aa)) is the Carrier 1 domain. O-(pantetheine 4'-phosphoryl)serine is present on Ser-1712. A compositionally biased stretch (low complexity) spans 1755 to 1790 (SDQSSGQSSSSGGLSPRSDSIGEITSSATTPPSLSP). Positions 1755–1796 (SDQSSGQSSSSGGLSPRSDSIGEITSSATTPPSLSPRGSVSG) are disordered. Residues 1793–1870 (SVSGSQCKDV…SFKHMFQQGH (78 aa)) form the Carrier 2 domain. Residue Ser-1830 is modified to O-(pantetheine 4'-phosphoryl)serine. Residues 1882–2146 (LKQYRATSTL…ERVAAFIRST (265 aa)) are thioesterase (TE) domain. Ser-1973 (for thioesterase activity) is an active-site residue.

Its function is as follows. Polyketide synthase; part of the Pks1 gene cluster that mediates the biosynthesis of an anthraquinone derivative pigment that contributes to conidial pigmentation that provides protection from UV radiation, heat and cold stress. The polyketide synthase Pks1 produces 1-acetyl-2,4,6,8-tetrahydroxy-9,10-anthraquinone though condensation of acetyl-CoA with malonyl-CoA. The dehydratase EthD and the laccase Mlac1 further convert the anthraquinone derivative into the final conidial pigment. In Metarhizium guizhouense (strain ARSEF 977), this protein is Polyketide synthase 1.